The chain runs to 319 residues: ATP-dependent 6-phosphofructokinase (319 aa).

Residues Gly10, 71 to 72 (RS), and 101 to 104 (GDGS) contribute to the ATP site. A Mg(2+)-binding site is contributed by Asp102. 125 to 127 (TID) is a binding site for substrate. Asp127 acts as the Proton acceptor in catalysis. An ADP-binding site is contributed by Arg154. Residues Arg162 and 169-171 (MGR) contribute to the substrate site. 185 to 187 (GAE) contributes to the ADP binding site. Substrate-binding positions include Glu223, Arg244, and 250–253 (HVQR).

Belongs to the phosphofructokinase type A (PFKA) family. ATP-dependent PFK group I subfamily. Prokaryotic clade 'B1' sub-subfamily. Homotetramer. Mg(2+) is required as a cofactor.

It is found in the cytoplasm. It catalyses the reaction beta-D-fructose 6-phosphate + ATP = beta-D-fructose 1,6-bisphosphate + ADP + H(+). Its pathway is carbohydrate degradation; glycolysis; D-glyceraldehyde 3-phosphate and glycerone phosphate from D-glucose: step 3/4. Its activity is regulated as follows. Allosterically activated by ADP and other diphosphonucleosides, and allosterically inhibited by phosphoenolpyruvate. In terms of biological role, catalyzes the phosphorylation of D-fructose 6-phosphate to fructose 1,6-bisphosphate by ATP, the first committing step of glycolysis. The sequence is that of ATP-dependent 6-phosphofructokinase from Wolinella succinogenes (strain ATCC 29543 / DSM 1740 / CCUG 13145 / JCM 31913 / LMG 7466 / NCTC 11488 / FDC 602W) (Vibrio succinogenes).